Here is a 625-residue protein sequence, read N- to C-terminus: tRNA (uracil-5-)-methyltransferase homolog A (625 aa).

2 disordered regions span residues M1 to A37 and R145 to V165. The segment covering P27 to A37 has biased composition (low complexity). The region spanning F73–P146 is the RRM domain. Positions Y180–L209 form a coiled coil. Residue S378 is modified to Phosphoserine. Positions 411, 461, and 510 each coordinate S-adenosyl-L-methionine. The active-site Nucleophile is C538. The active-site Proton acceptor is the E581. Positions G594 to S625 are disordered. Pro residues predominate over residues H601–P612. A Phosphoserine modification is found at S602. Residues N614–S625 show a composition bias toward polar residues.

It belongs to the class I-like SAM-binding methyltransferase superfamily. RNA M5U methyltransferase family.

It is found in the cytoplasm. It localises to the cytosol. It catalyses the reaction uridine(54) in tRNA + S-adenosyl-L-methionine = 5-methyluridine(54) in tRNA + S-adenosyl-L-homocysteine + H(+). It carries out the reaction a uridine in mRNA + S-adenosyl-L-methionine = a 5-methyluridine in mRNA + S-adenosyl-L-homocysteine + H(+). Functionally, S-adenosyl-L-methionine-dependent methyltransferase that catalyzes the formation of 5-methyl-uridine in tRNAs and some mRNAs. Mainly catalyzes the methylation of uridine at position 54 (m5U54) in cytosolic tRNAs. Also able to mediate the formation of 5-methyl-uridine in some mRNAs. The sequence is that of tRNA (uracil-5-)-methyltransferase homolog A from Homo sapiens (Human).